The following is a 292-amino-acid chain: Proteasome subunit beta (292 aa).

The propeptide at 1-62 (MSESLGSVPG…HRAADDIPHG (62 aa)) is removed in mature form; by autocatalysis. Catalysis depends on Thr-63, which acts as the Nucleophile.

Belongs to the peptidase T1B family. In terms of assembly, the 20S proteasome core is composed of 14 alpha and 14 beta subunits that assemble into four stacked heptameric rings, resulting in a barrel-shaped structure. The two inner rings, each composed of seven catalytic beta subunits, are sandwiched by two outer rings, each composed of seven alpha subunits. The catalytic chamber with the active sites is on the inside of the barrel. Has a gated structure, the ends of the cylinder being occluded by the N-termini of the alpha-subunits. Is capped by the proteasome-associated ATPase, ARC.

It localises to the cytoplasm. The catalysed reaction is Cleavage of peptide bonds with very broad specificity.. It participates in protein degradation; proteasomal Pup-dependent pathway. With respect to regulation, the formation of the proteasomal ATPase ARC-20S proteasome complex, likely via the docking of the C-termini of ARC into the intersubunit pockets in the alpha-rings, may trigger opening of the gate for substrate entry. Interconversion between the open-gate and close-gate conformations leads to a dynamic regulation of the 20S proteasome proteolysis activity. Component of the proteasome core, a large protease complex with broad specificity involved in protein degradation. The sequence is that of Proteasome subunit beta from Gordonia bronchialis (strain ATCC 25592 / DSM 43247 / BCRC 13721 / JCM 3198 / KCTC 3076 / NBRC 16047 / NCTC 10667) (Rhodococcus bronchialis).